The following is a 198-amino-acid chain: Tumor necrosis factor receptor superfamily member 22 (198 aa).

Residues 1-20 (MFGFFCSLVSSLSRWFLWRR) lie on the Cytoplasmic side of the membrane. A helical; Signal-anchor for type II membrane protein membrane pass occupies residues 21–41 (LLLLLLLLLLNLPLQVKFAML). Over 42 to 198 (ELHSFKCPAG…SVVVFRIIRR (157 aa)) the chain is Extracellular. TNFR-Cys repeat units lie at residues 47-82 (KCPA…QGQC), 84-124 (KCHP…DRKC), and 125-165 (QCRT…NTVC). Intrachain disulfides connect Cys-48–Cys-59, Cys-60–Cys-73, Cys-63–Cys-82, Cys-85–Cys-100, Cys-103–Cys-116, Cys-106–Cys-124, Cys-126–Cys-141, Cys-144–Cys-157, and Cys-147–Cys-165. Asn-62 carries N-linked (GlcNAc...) asparagine glycosylation. An N-linked (GlcNAc...) asparagine glycan is attached at Asn-158.

Ubiquitous.

It localises to the cell membrane. It is found in the secreted. Functionally, receptor for the cytotoxic ligand TNFSF10/TRAIL. Lacks a cytoplasmic death domain and hence is not capable of inducing apoptosis. Protects cells against TRAIL mediated apoptosis possibly through ligand competition. Cannot induce the NF-kappa-B pathway. This Mus musculus (Mouse) protein is Tumor necrosis factor receptor superfamily member 22 (Tnfrsf22).